Here is an 81-residue protein sequence, read N- to C-terminus: Conotoxin Vc6.7 (81 aa).

Residues 1–19 (MEKLTILLLVAAVLMSIQA) form the signal peptide. The propeptide occupies 20–44 (VNQEKHQRAKMNLLSKRKPPAERWW). 3 disulfides stabilise this stretch: Cys-49/Cys-63, Cys-56/Cys-67, and Cys-62/Cys-72.

This sequence belongs to the conotoxin O2 superfamily. Expressed by the venom duct.

The protein localises to the secreted. In terms of biological role, inhibits voltage-gated ion channels. In Conus victoriae (Queen Victoria cone), this protein is Conotoxin Vc6.7.